The following is a 170-amino-acid chain: Mediator of RNA polymerase II transcription subunit 10 (170 aa).

Belongs to the Mediator complex subunit 10 family. As to quaternary structure, component of the Mediator complex.

It is found in the nucleus. Functionally, component of the Mediator complex, a coactivator involved in the regulated transcription of nearly all RNA polymerase II-dependent genes. Mediator functions as a bridge to convey information from gene-specific regulatory proteins to the basal RNA polymerase II transcription machinery. Mediator is recruited to promoters by direct interactions with regulatory proteins and serves as a scaffold for the assembly of a functional preinitiation complex with RNA polymerase II and the general transcription factors. This Candida albicans (strain SC5314 / ATCC MYA-2876) (Yeast) protein is Mediator of RNA polymerase II transcription subunit 10 (NUT2).